The chain runs to 171 residues: Probable DNA-directed RNA polymerase subunit delta (171 aa).

The region spanning 14 to 81 (MALVEIAYEI…SDQTWGLRSW (68 aa)) is the HTH HARE-type domain. Positions 138 to 171 (EFDEIDEADDDELDDLEDEILDDDEDFDEEEDEE) are disordered.

This sequence belongs to the RpoE family. RNAP is composed of a core of 2 alpha, a beta and a beta' subunits. The core is associated with a delta subunit and one of several sigma factors.

Participates in both the initiation and recycling phases of transcription. In the presence of the delta subunit, RNAP displays an increased specificity of transcription, a decreased affinity for nucleic acids, and an increased efficiency of RNA synthesis because of enhanced recycling. The polypeptide is Probable DNA-directed RNA polymerase subunit delta (Bacillus licheniformis (strain ATCC 14580 / DSM 13 / JCM 2505 / CCUG 7422 / NBRC 12200 / NCIMB 9375 / NCTC 10341 / NRRL NRS-1264 / Gibson 46)).